The chain runs to 316 residues: Methionyl-tRNA formyltransferase (316 aa).

Residue 112–115 participates in (6S)-5,6,7,8-tetrahydrofolate binding; sequence SLLP.

It belongs to the Fmt family.

The enzyme catalyses L-methionyl-tRNA(fMet) + (6R)-10-formyltetrahydrofolate = N-formyl-L-methionyl-tRNA(fMet) + (6S)-5,6,7,8-tetrahydrofolate + H(+). In terms of biological role, attaches a formyl group to the free amino group of methionyl-tRNA(fMet). The formyl group appears to play a dual role in the initiator identity of N-formylmethionyl-tRNA by promoting its recognition by IF2 and preventing the misappropriation of this tRNA by the elongation apparatus. The sequence is that of Methionyl-tRNA formyltransferase from Haemophilus ducreyi (strain 35000HP / ATCC 700724).